Consider the following 298-residue polypeptide: MSFFHANQREALNQSLAELQGRINVSFEFFPPRTSDMEETLWSSIDRLSSLKPKFVSVTYGANSGERDRTHSIIKTIKERTGLEAAPHLTCIDASREQLREIAQDYWESGIRHIVALRGDLPQEGGKPDMYAADLVSLLKEVGDFDISVAAYPEVHPEAKSAQADLINLKHKIDAGANRAITQFFFDVESYLRFRDRCVATGIDVEIVPGILPVSNFKQLQKFATMTNVRVPNWMTTMFDGLDNDPETRKMVGASIAMDMVKILSREGVKDFHFYTLNRAELSYAICHTLGVRPDVAR.

Glutamate 28 serves as the catalytic Proton donor/acceptor. NADH is bound at residue threonine 59. The FAD site is built by tyrosine 60, alanine 62, histidine 88, arginine 118, glycine 119, aspartate 120, alanine 132, tyrosine 152, histidine 156, alanine 159, aspartate 165, asparagine 168, and lysine 172. Residue aspartate 120 participates in (6S)-5-methyl-5,6,7,8-tetrahydrofolate binding. Residue glutamine 183 participates in NADH binding. 3 residues coordinate (6S)-5-methyl-5,6,7,8-tetrahydrofolate: glutamine 183, glutamine 219, and arginine 279.

Belongs to the methylenetetrahydrofolate reductase family. FAD is required as a cofactor.

It carries out the reaction (6S)-5-methyl-5,6,7,8-tetrahydrofolate + NAD(+) = (6R)-5,10-methylene-5,6,7,8-tetrahydrofolate + NADH + H(+). It participates in one-carbon metabolism; tetrahydrofolate interconversion. The protein operates within amino-acid biosynthesis; L-methionine biosynthesis via de novo pathway. In terms of biological role, catalyzes the NADH-dependent reduction of 5,10-methylenetetrahydrofolate to 5-methyltetrahydrofolate. Is required to provide the methyl group necessary for methionine synthetase to convert homocysteine to methionine; the methyl group is given by 5-methyltetrahydrofolate. The sequence is that of 5,10-methylenetetrahydrofolate reductase (metF) from Pectobacterium carotovorum subsp. carotovorum (Erwinia carotovora subsp. carotovora).